The chain runs to 245 residues: DNA repair protein RecO (245 aa).

It belongs to the RecO family.

Functionally, involved in DNA repair and RecF pathway recombination. This chain is DNA repair protein RecO, found in Pectobacterium atrosepticum (strain SCRI 1043 / ATCC BAA-672) (Erwinia carotovora subsp. atroseptica).